Consider the following 184-residue polypeptide: Protein DP71L (184 aa).

Over residues 1 to 15 the composition is skewed to basic residues; sequence MSRRNKRSRRRRKKP. Positions 1–41 are disordered; the sequence is MSRRNKRSRRRRKKPLNTIQPGPSKPSAQDEPIKSVSHHSS. Important for host CHOP inhibition regions lie at residues 125-127 and 169-173; these read VYF and LSAVL.

Belongs to the asfivirus DP71L family. As to quaternary structure, interacts (via C-terminus) with host PPP1CB.

Its function is as follows. Interacts with the host phosphatase PP1 catalytic subunit (PPP1CB) and recruits it to dephosphorylate EIF2S1/eIF2alpha and therefore restores the host translation that has been shut-down by the host. Also inhibits the EIF2S1/eIF2alpha-ATF4-DDIT3/CHOP pathway. The polypeptide is Protein DP71L (Ornithodoros (relapsing fever ticks)).